A 323-amino-acid polypeptide reads, in one-letter code: Mediator of RNA polymerase II transcription subunit 4 (323 aa).

A disordered region spans residues 1 to 36 (MLPFKKADSPFKSNPVSRVGSSTRLNQLGNIKSNPT). A compositionally biased stretch (polar residues) spans 11–36 (FKSNPVSRVGSSTRLNQLGNIKSNPT). Positions 79–167 (MVQKVNEYER…VSYRNELKKL (89 aa)) form a coiled coil. Basic and acidic residues-rich tracts occupy residues 241 to 262 (HELG…KVDH) and 282 to 303 (DEQR…KEEQ). Residues 241–323 (HELGETDKEN…LFDPDDEYSD (83 aa)) are disordered.

Belongs to the Mediator complex subunit 4 family. As to quaternary structure, component of the Mediator complex.

It localises to the nucleus. In terms of biological role, component of the Mediator complex, a coactivator involved in the regulated transcription of nearly all RNA polymerase II-dependent genes. Mediator functions as a bridge to convey information from gene-specific regulatory proteins to the basal RNA polymerase II transcription machinery. Mediator is recruited to promoters by direct interactions with regulatory proteins and serves as a scaffold for the assembly of a functional preinitiation complex with RNA polymerase II and the general transcription factors. The polypeptide is Mediator of RNA polymerase II transcription subunit 4 (MED4) (Candida albicans (strain SC5314 / ATCC MYA-2876) (Yeast)).